The following is a 425-amino-acid chain: UDP-N-acetylglucosamine 1-carboxyvinyltransferase (425 aa).

23–24 (KN) serves as a coordination point for phosphoenolpyruvate. Residue arginine 100 coordinates UDP-N-acetyl-alpha-D-glucosamine. The Proton donor role is filled by cysteine 124. At cysteine 124 the chain carries 2-(S-cysteinyl)pyruvic acid O-phosphothioketal. UDP-N-acetyl-alpha-D-glucosamine-binding positions include 169–172 (KVSV), aspartate 313, and valine 335.

Belongs to the EPSP synthase family. MurA subfamily.

The protein resides in the cytoplasm. The catalysed reaction is phosphoenolpyruvate + UDP-N-acetyl-alpha-D-glucosamine = UDP-N-acetyl-3-O-(1-carboxyvinyl)-alpha-D-glucosamine + phosphate. Its pathway is cell wall biogenesis; peptidoglycan biosynthesis. Functionally, cell wall formation. Adds enolpyruvyl to UDP-N-acetylglucosamine. The protein is UDP-N-acetylglucosamine 1-carboxyvinyltransferase of Wolbachia pipientis subsp. Culex pipiens (strain wPip).